We begin with the raw amino-acid sequence, 333 residues long: tRNA uridine(34) hydroxylase (333 aa).

Residues 123-217 enclose the Rhodanese domain; it reads SDPEVILVDT…YLEEIKQEES (95 aa). Cysteine 177 serves as the catalytic Cysteine persulfide intermediate.

The protein belongs to the TrhO family.

It carries out the reaction uridine(34) in tRNA + AH2 + O2 = 5-hydroxyuridine(34) in tRNA + A + H2O. Catalyzes oxygen-dependent 5-hydroxyuridine (ho5U) modification at position 34 in tRNAs. The sequence is that of tRNA uridine(34) hydroxylase from Shewanella sp. (strain MR-7).